A 262-amino-acid chain; its full sequence is MSTHANHPFHLVDYSPWPLTGAIGAMTTVSGLVQWFHQYTMTLFILGNVITILTMYQWWRDISREGTFQGLHTFPVTIGLRWGMILFIVSEVFFFISFFWAFFHSSLSPTIELGMTWPPVGIAAFNPFQIPLLNTAILLASGVTVTWAHHALMEGNHSQATQGLFFTIVLGVYFTILQAYEYIEAPFTIADAVYGSTFYMATGFHGLHVLIGTTFLLICFLRHINYHFSKNHHFGFEAAAWYWHFVDVVWLFLYITIYWWGS.

6 helical membrane passes run 39–59 (YTMT…YQWW), 83–103 (GMIL…WAFF), 120–140 (VGIA…ILLA), 163–183 (GLFF…YEYI), 201–221 (ATGF…ICFL), and 240–260 (AWYW…IYWW).

Belongs to the cytochrome c oxidase subunit 3 family. In terms of assembly, component of the cytochrome c oxidase (complex IV, CIV), a multisubunit enzyme composed of a catalytic core of 3 subunits and several supernumerary subunits. The complex exists as a monomer or a dimer and forms supercomplexes (SCs) in the inner mitochondrial membrane with ubiquinol-cytochrome c oxidoreductase (cytochrome b-c1 complex, complex III, CIII).

Its subcellular location is the mitochondrion inner membrane. It carries out the reaction 4 Fe(II)-[cytochrome c] + O2 + 8 H(+)(in) = 4 Fe(III)-[cytochrome c] + 2 H2O + 4 H(+)(out). Functionally, component of the cytochrome c oxidase, the last enzyme in the mitochondrial electron transport chain which drives oxidative phosphorylation. The respiratory chain contains 3 multisubunit complexes succinate dehydrogenase (complex II, CII), ubiquinol-cytochrome c oxidoreductase (cytochrome b-c1 complex, complex III, CIII) and cytochrome c oxidase (complex IV, CIV), that cooperate to transfer electrons derived from NADH and succinate to molecular oxygen, creating an electrochemical gradient over the inner membrane that drives transmembrane transport and the ATP synthase. Cytochrome c oxidase is the component of the respiratory chain that catalyzes the reduction of oxygen to water. Electrons originating from reduced cytochrome c in the intermembrane space (IMS) are transferred via the dinuclear copper A center (CU(A)) of subunit 2 and heme A of subunit 1 to the active site in subunit 1, a binuclear center (BNC) formed by heme A3 and copper B (CU(B)). The BNC reduces molecular oxygen to 2 water molecules using 4 electrons from cytochrome c in the IMS and 4 protons from the mitochondrial matrix. The protein is Cytochrome c oxidase subunit 3 (COIII) of Anopheles gambiae (African malaria mosquito).